We begin with the raw amino-acid sequence, 36 residues long: Photosystem II reaction center protein M (36 aa).

Residues 7 to 27 (GFVASLMFVLVPTVFLIVLFI) form a helical membrane-spanning segment.

The protein belongs to the PsbM family. As to quaternary structure, PSII is composed of 1 copy each of membrane proteins PsbA, PsbB, PsbC, PsbD, PsbE, PsbF, PsbH, PsbI, PsbJ, PsbK, PsbL, PsbM, PsbT, PsbX, PsbY, PsbZ, Psb30/Ycf12, peripheral proteins PsbO, CyanoQ (PsbQ), PsbU, PsbV and a large number of cofactors. It forms dimeric complexes.

It localises to the cellular thylakoid membrane. Its function is as follows. One of the components of the core complex of photosystem II (PSII). PSII is a light-driven water:plastoquinone oxidoreductase that uses light energy to abstract electrons from H(2)O, generating O(2) and a proton gradient subsequently used for ATP formation. It consists of a core antenna complex that captures photons, and an electron transfer chain that converts photonic excitation into a charge separation. This subunit is found at the monomer-monomer interface. This is Photosystem II reaction center protein M from Synechococcus sp. (strain CC9311).